The chain runs to 62 residues: LECHDQQSSQTPTTTGCSGGETNCYKKRWRDHRGYRTERGCGCPSVKNGIEINCCTTDRCNN.

Polar residues predominate over residues 1-16 (LECHDQQSSQTPTTTG). The tract at residues 1-22 (LECHDQQSSQTPTTTGCSGGET) is disordered. 4 cysteine pairs are disulfide-bonded: Cys-3–Cys-24, Cys-17–Cys-41, Cys-43–Cys-54, and Cys-55–Cys-60.

Belongs to the three-finger toxin family. Short-chain subfamily. Type I alpha-neurotoxin sub-subfamily. Expressed by the venom gland.

The protein localises to the secreted. Its function is as follows. Binds to muscle nicotinic acetylcholine receptor (nAChR) and inhibit acetylcholine from binding to the receptor, thereby impairing neuromuscular transmission. The polypeptide is Neurotoxin 3 (Naja sputatrix (Malayan spitting cobra)).